A 293-amino-acid chain; its full sequence is 4-diphosphocytidyl-2-C-methyl-D-erythritol kinase (293 aa).

Lysine 16 is a catalytic residue. 99–109 (PMGAGLGGGSS) is a binding site for ATP. The active site involves aspartate 141.

It belongs to the GHMP kinase family. IspE subfamily.

The enzyme catalyses 4-CDP-2-C-methyl-D-erythritol + ATP = 4-CDP-2-C-methyl-D-erythritol 2-phosphate + ADP + H(+). It functions in the pathway isoprenoid biosynthesis; isopentenyl diphosphate biosynthesis via DXP pathway; isopentenyl diphosphate from 1-deoxy-D-xylulose 5-phosphate: step 3/6. Its function is as follows. Catalyzes the phosphorylation of the position 2 hydroxy group of 4-diphosphocytidyl-2C-methyl-D-erythritol. The chain is 4-diphosphocytidyl-2-C-methyl-D-erythritol kinase from Burkholderia pseudomallei (strain 668).